Here is a 149-residue protein sequence, read N- to C-terminus: MHCPFCSTEETKVIDSRLVSEGYQVRRRRECGNCHERFTTFETAELIIPKVIKNDGTREPFNEEKLRRGIQHALEKRPVSENDVEKAISYIIHRLRSTGEREVPSKLVGTLVMEELKKLDKVAYIRFASVYLSFDDINQFSKEIEKLRD.

A zinc finger spans residues 3 to 34 (CPFCSTEETKVIDSRLVSEGYQVRRRRECGNC). The ATP-cone domain maps to 49 to 139 (PKVIKNDGTR…VYLSFDDINQ (91 aa)).

It belongs to the NrdR family. It depends on Zn(2+) as a cofactor.

Negatively regulates transcription of bacterial ribonucleotide reductase nrd genes and operons by binding to NrdR-boxes. The chain is Transcriptional repressor NrdR from Pasteurella multocida (strain Pm70).